A 208-amino-acid chain; its full sequence is Uracil phosphoribosyltransferase (208 aa).

Residues Arg78, Arg103, and 130-138 (DPMLATGGS) each bind 5-phospho-alpha-D-ribose 1-diphosphate. Uracil-binding positions include Ile193 and 198–200 (GDA). Position 199 (Asp199) interacts with 5-phospho-alpha-D-ribose 1-diphosphate.

Belongs to the UPRTase family. Requires Mg(2+) as cofactor.

It catalyses the reaction UMP + diphosphate = 5-phospho-alpha-D-ribose 1-diphosphate + uracil. It functions in the pathway pyrimidine metabolism; UMP biosynthesis via salvage pathway; UMP from uracil: step 1/1. With respect to regulation, allosterically activated by GTP. Its function is as follows. Catalyzes the conversion of uracil and 5-phospho-alpha-D-ribose 1-diphosphate (PRPP) to UMP and diphosphate. This chain is Uracil phosphoribosyltransferase, found in Neisseria meningitidis serogroup B (strain ATCC BAA-335 / MC58).